The following is a 569-amino-acid chain: Toxin YxiD (569 aa).

In terms of domain architecture, LXG spans 1–235 (MKTLDVHALH…NPQMKQADDS (235 aa)). A coiled-coil region spans residues 8–91 (ALHEGIQHTI…QHAISSVESN (84 aa)). Residues 548–569 (HQAGIHGTGSPANELFKGGKKK) are disordered.

It in the N-terminal section; belongs to the LXG family. As to quaternary structure, probably interacts with cognate immunity protein YxxD but not with non-cognate immunity proteins. The interaction inhibits the toxic activity of YxxD.

The protein resides in the secreted. Its function is as follows. Toxic component of one of 6 LXG toxin-immunity modules in this strain. They promote kin selection, mediate competition in biofilms, and drive spatial segregation of different strains, indicating that LXG toxins may help avoid warfare between strains in biofilms. Mediates intercellular competition during biofilm formation; disruption of the operon disadvantages the bacteria, but overexpression of the cognate immunity protein restores growth in competition with wild-type. Overexpression alone in situ causes growth arrest but not cell lysis, a large decrease in chromosomal DNA content and the production of anucleate cells. No effect is seen on rRNA. Co-overexpression with cognate immunity protein YxxD does not cause growth arrest. The toxic effect is not dependent on the epsA and tapA operons which are required for biofilm formation. The polypeptide is Toxin YxiD (yxiD) (Bacillus subtilis (strain 168)).